The sequence spans 1091 residues: Isoleucine--tRNA ligase (1091 aa).

The 'HIGH' region signature appears at 48-58 (PFATGLPHFGH). Residues 625 to 629 (KMSKA) carry the 'KMSKS' region motif. ATP is bound at residue Lys628.

Belongs to the class-I aminoacyl-tRNA synthetase family. IleS type 2 subfamily. In terms of assembly, monomer. The cofactor is Zn(2+).

The protein localises to the cytoplasm. It catalyses the reaction tRNA(Ile) + L-isoleucine + ATP = L-isoleucyl-tRNA(Ile) + AMP + diphosphate. Catalyzes the attachment of isoleucine to tRNA(Ile). As IleRS can inadvertently accommodate and process structurally similar amino acids such as valine, to avoid such errors it has two additional distinct tRNA(Ile)-dependent editing activities. One activity is designated as 'pretransfer' editing and involves the hydrolysis of activated Val-AMP. The other activity is designated 'posttransfer' editing and involves deacylation of mischarged Val-tRNA(Ile). The chain is Isoleucine--tRNA ligase from Treponema pallidum (strain Nichols).